The following is a 209-amino-acid chain: MARYTGADCKRCRREKTKLFLKGSKCDTPKCPIEIRPYPPGEHGRGRTKDSEYLLQKREKQKCARIYGVLEKQFRGYYDEANRRAGKTGDELLKILESRLDNVVYRGGFAPSRDAARQAVRHGHVQVNGRKVDIPSYRISENDIVEIAPKARELTPFIVARETAGQGRAVPAWLEVIPSQLRILVHSLPARQVIDTQVQEQLIVELYSK.

The region spanning 98–164 is the S4 RNA-binding domain; it reads SRLDNVVYRG…TPFIVARETA (67 aa).

It belongs to the universal ribosomal protein uS4 family. In terms of assembly, part of the 30S ribosomal subunit. Contacts protein S5. The interaction surface between S4 and S5 is involved in control of translational fidelity.

In terms of biological role, one of the primary rRNA binding proteins, it binds directly to 16S rRNA where it nucleates assembly of the body of the 30S subunit. With S5 and S12 plays an important role in translational accuracy. The chain is Small ribosomal subunit protein uS4 from Frankia casuarinae (strain DSM 45818 / CECT 9043 / HFP020203 / CcI3).